The sequence spans 361 residues: Probable purine permease 13 (361 aa).

Helical transmembrane passes span 35–55, 68–88, 103–123, 129–151, 156–176, 192–212, 238–258, 268–288, 289–309, and 323–343; these read WILVFISIFFLISAQAIAVLL, WISTLVQTCGFPILYLPLCFL, LVWIYLSLGFAIGLDNLLYSF, SASTYSILCSSQLAFNGVFSYYI, ITCLILFSVLFLSVSAVLVSL, LIGCLCTVFASLIYSLQLSLM, VASCVAVIGLFASGEWMLLSV, VIYVLTLVGTAVSWQLGSVGA, VALIFLVSSLFSNLIGTLSLI, and LTEVKMVAMLIAFMGFGFYIY.

It belongs to the purine permeases (TC 2.A.7.14) family.

It is found in the membrane. This chain is Probable purine permease 13 (PUP13), found in Arabidopsis thaliana (Mouse-ear cress).